A 213-amino-acid chain; its full sequence is Leucine-rich repeat protein 1 (213 aa).

The signal sequence occupies residues 1–21; it reads MGAGALGVVAMVAAAVVVAMA. 4 LRR repeats span residues 90–113, 115–137, 138–161, and 163–186; these read DHLQ…LGNL, NLIS…LGKL, TSLV…LAGI, and SLKV…PFEH.

Interacts with HIR1.

The protein resides in the early endosome membrane. Its subcellular location is the late endosome membrane. The protein localises to the cell membrane. Its function is as follows. Involved in plant defense response. The chain is Leucine-rich repeat protein 1 from Oryza sativa subsp. indica (Rice).